The sequence spans 340 residues: Guanine nucleotide-binding protein G(I)/G(S)/G(T) subunit beta-1 (340 aa).

At serine 2 the chain carries N-acetylserine. Position 2 is a phosphoserine (serine 2). WD repeat units lie at residues 46-94 (RTRR…HAIP), 95-140 (LRSS…RELA), 141-181 (GHTG…TTFT), 182-223 (GHTG…QTFT), 224-267 (GHES…YSHD), 268-309 (NIIC…GVLA), and 310-340 (GHDNRVSCLGVTDDGMAVATGSWDSFLKIWN). Position 266 is a phosphohistidine (histidine 266).

This sequence belongs to the WD repeat G protein beta family. G proteins are composed of 3 units, alpha, beta and gamma. The heterodimer formed by GNB1 and GNG2 interacts with ARHGEF5. The heterodimer formed by GNB1 and GNG2 interacts with GRK2. Forms a complex with GNAO1 and GNG3. Interacts with ARHGEF18 and RASD2. Forms complexes with TAS2R14 and G-proteins; these complexes play a role in the perception of bitterness. Component of the TAS2R14-GNAI1 complex, consisting of TAS2R14, GNAI1, GNB1 and GNG2. Component of the TAS2R14-GNAT3 complex, consisting of TAS2R14, GNAT3, GNB1 and GNG2. Component of the TAS2R14-GNAS2 complex, consisting of TAS2R14, GNAS2, GNB1 and GNG2. In terms of processing, phosphorylation at His-266 by NDKB contributes to G protein activation by increasing the high energetic phosphate transfer onto GDP.

Functionally, guanine nucleotide-binding proteins (G proteins) are involved as a modulator or transducer in various transmembrane signaling systems. The beta and gamma chains are required for the GTPase activity, for replacement of GDP by GTP, and for G protein-effector interaction. This Bos taurus (Bovine) protein is Guanine nucleotide-binding protein G(I)/G(S)/G(T) subunit beta-1 (GNB1).